The following is a 461-amino-acid chain: Photosystem II CP43 reaction center protein (461 aa).

Residues 1-2 (ME) constitute a propeptide that is removed on maturation. Thr-3 carries the post-translational modification N-acetylthreonine. Thr-3 carries the post-translational modification Phosphothreonine. The next 5 helical transmembrane spans lie at 57-81 (LFEV…PHLA), 122-143 (LLGP…KDRN), 166-188 (KALY…RKIT), 243-263 (KPFA…LSYS), and 279-300 (WFNN…ASQA). Residue Glu-355 coordinates [CaMn4O5] cluster. Residues 435-459 (RARAAAAGFEKGIDRDLEPVLFMTP) form a helical membrane-spanning segment.

The protein belongs to the PsbB/PsbC family. PsbC subfamily. In terms of assembly, PSII is composed of 1 copy each of membrane proteins PsbA, PsbB, PsbC, PsbD, PsbE, PsbF, PsbH, PsbI, PsbJ, PsbK, PsbL, PsbM, PsbT, PsbX, PsbY, PsbZ, Psb30/Ycf12, at least 3 peripheral proteins of the oxygen-evolving complex and a large number of cofactors. It forms dimeric complexes. The cofactor is Binds multiple chlorophylls and provides some of the ligands for the Ca-4Mn-5O cluster of the oxygen-evolving complex. It may also provide a ligand for a Cl- that is required for oxygen evolution. PSII binds additional chlorophylls, carotenoids and specific lipids..

Its subcellular location is the plastid. The protein resides in the chloroplast thylakoid membrane. Functionally, one of the components of the core complex of photosystem II (PSII). It binds chlorophyll and helps catalyze the primary light-induced photochemical processes of PSII. PSII is a light-driven water:plastoquinone oxidoreductase, using light energy to abstract electrons from H(2)O, generating O(2) and a proton gradient subsequently used for ATP formation. The chain is Photosystem II CP43 reaction center protein from Nandina domestica (Heavenly bamboo).